The sequence spans 110 residues: Phosphoribosyl-ATP pyrophosphatase (110 aa).

The protein belongs to the PRA-PH family.

It localises to the cytoplasm. The enzyme catalyses 1-(5-phospho-beta-D-ribosyl)-ATP + H2O = 1-(5-phospho-beta-D-ribosyl)-5'-AMP + diphosphate + H(+). The protein operates within amino-acid biosynthesis; L-histidine biosynthesis; L-histidine from 5-phospho-alpha-D-ribose 1-diphosphate: step 2/9. The sequence is that of Phosphoribosyl-ATP pyrophosphatase from Clostridium botulinum (strain ATCC 19397 / Type A).